Reading from the N-terminus, the 494-residue chain is 5'-3' exonuclease PLD3 (494 aa).

Topologically, residues 1–37 (MNPKVEYKQIQSHDEAENQVLQHECHQAKARKYYRCA) are cytoplasmic. A helical; Signal-anchor for type II membrane protein transmembrane segment spans residues 38–58 (VVIAIIITLLFCVLASQLLLF). At 59-494 (PLFSITSQTT…LSSWKEKCIF (436 aa)) the chain is on the lumenal side. N-linked (GlcNAc...) asparagine glycosylation occurs at Asn-100. Residues 198–225 (TDGVLHTKFWVVDSEHFYIGSANMDWRS) form the PLD phosphodiesterase 1 domain. Catalysis depends on residues His-203, Lys-205, and Asp-210. N-linked (GlcNAc...) asparagine glycans are attached at residues Asn-238, Asn-260, Asn-270, Asn-286, and Asn-389. The region spanning 413-439 (YARVNHNKYMVTDRVAYIGTSNWSGDY) is the PLD phosphodiesterase 2 domain. Catalysis depends on residues His-418, Lys-420, and Asp-425. 3 N-linked (GlcNAc...) asparagine glycosylation sites follow: Asn-434, Asn-451, and Asn-477.

Belongs to the phospholipase D family. Post-translationally, N-glycosylated. In terms of processing, proteolytically processed to a soluble form that is stable within endosomes and lysosomes. During transport through the secretory pathway becomes proteolysed by cysteine proteases, thereby releasing a stable soluble lysosomal lumenal polypeptide, whereas the transmembrane-bound fragment is rapidly degraded. Its transport route to lysosomes involves ubiquitination and the ESCRT complex. Ubiquitinated. Ubiquitination mediates sorting into lysosomes.

The protein localises to the endoplasmic reticulum membrane. It localises to the lysosome lumen. It is found in the early endosome membrane. The protein resides in the late endosome membrane. Its subcellular location is the golgi apparatus membrane. The protein localises to the endosome membrane. It carries out the reaction Exonucleolytic cleavage in the 5'- to 3'-direction to yield nucleoside 3'-phosphates.. 5'-&gt;3' DNA exonuclease which digests single-stranded DNA (ssDNA). Regulates inflammatory cytokine responses via the degradation of nucleic acids, by reducing the concentration of ssDNA able to stimulate TLR9, a nucleotide-sensing receptor in collaboration with PLD4. May be important in myotube formation. Plays a role in lysosomal homeostasis. Involved in the regulation of endosomal protein sorting. The chain is 5'-3' exonuclease PLD3 (pld3) from Xenopus tropicalis (Western clawed frog).